The chain runs to 219 residues: Thiopurine S-methyltransferase (219 aa).

Trp10, Leu45, Glu66, and Arg123 together coordinate S-adenosyl-L-methionine.

It belongs to the class I-like SAM-binding methyltransferase superfamily. TPMT family.

It is found in the cytoplasm. It catalyses the reaction S-adenosyl-L-methionine + a thiopurine = S-adenosyl-L-homocysteine + a thiopurine S-methylether.. In Shewanella frigidimarina (strain NCIMB 400), this protein is Thiopurine S-methyltransferase.